The chain runs to 476 residues: tRNA(Ile)-lysidine synthase (476 aa).

Serine 30–serine 35 is an ATP binding site.

This sequence belongs to the tRNA(Ile)-lysidine synthase family.

The protein resides in the cytoplasm. The enzyme catalyses cytidine(34) in tRNA(Ile2) + L-lysine + ATP = lysidine(34) in tRNA(Ile2) + AMP + diphosphate + H(+). Functionally, ligates lysine onto the cytidine present at position 34 of the AUA codon-specific tRNA(Ile) that contains the anticodon CAU, in an ATP-dependent manner. Cytidine is converted to lysidine, thus changing the amino acid specificity of the tRNA from methionine to isoleucine. This is tRNA(Ile)-lysidine synthase from Bacillus cereus (strain ATCC 10987 / NRS 248).